Reading from the N-terminus, the 2151-residue chain is Calpain-type cysteine protease DEK1 (2151 aa).

Positions 1–32 are cleaved as a signal peptide; it reads MEGDERGVLLACVISGTLFTVFGSGSFWILWA. At 33 to 69 the chain is on the extracellular side; it reads VNWRPWRLYSWIFARKWPKVLQGPQLDILCGVLSLFA. Residues 70 to 90 form a helical membrane-spanning segment; the sequence is WIVVVSPIAILIGWGSWLIVI. At 91–94 the chain is on the cytoplasmic side; it reads LDRH. A helical membrane pass occupies residues 95-115; sequence IIGLAIIMAGTALLLAFYSIM. The Extracellular segment spans residues 116–126; sequence LWWRTQWQSSR. The helical transmembrane segment at 127 to 147 threads the bilayer; sequence AVALLLLLGVALLCAYELCAV. Residues 148–163 lie on the Cytoplasmic side of the membrane; sequence YVTAGAHASQQYSPSG. A helical membrane pass occupies residues 164–184; that stretch reads FFFGVSAIALAINMLFICRMV. The Extracellular segment spans residues 185-235; the sequence is FNGNGLDVDEYVRRAYKFAYSDCIEVGPVACLPEPPDPNELYPRQTSRASH. Residues 236 to 256 traverse the membrane as a helical segment; it reads LGLLYLGSLVVLLAYSVLYGL. The Cytoplasmic portion of the chain corresponds to 257–263; the sequence is TARESRW. Residues 264 to 284 form a helical membrane-spanning segment; sequence LGGITSAAVIVLDWNIGACLY. Over 285–293 the chain is Extracellular; it reads GFKLLQNRV. Residues 294 to 314 form a helical membrane-spanning segment; the sequence is LALFVAGISRLFLICFGIHYW. Topologically, residues 315–319 are cytoplasmic; it reads YLGHC. Residues 320 to 340 traverse the membrane as a helical segment; sequence ISYIFVASVLSGAAVSRHLSI. Residues 341–615 are Extracellular-facing; the sequence is TDPSAARRDA…LLLHHVAGTP (275 aa). 2 disordered regions span residues 363 to 393 and 405 to 442; these read RRKE…GHTG and CTAD…SCRS. A compositionally biased stretch (low complexity) spans 369–388; that stretch reads SSSSSSDGCGSSIKRSSSID. A compositionally biased stretch (polar residues) spans 405-420; the sequence is CTADNLTRTGSSQEGI. Over residues 430-442 the composition is skewed to low complexity; it reads RPSLGLRSSSCRS. A helical membrane pass occupies residues 616-636; the sequence is ERAWGLFSLVFILETIIVAIF. The Cytoplasmic segment spans residues 637-652; the sequence is RPKTITIINSSHQQFE. A helical transmembrane segment spans residues 653–673; it reads FGFSVLLLSPVVCSIMAFLRS. Residues 674–686 lie on the Extracellular side of the membrane; the sequence is LQVEEMALTSKSR. A helical membrane pass occupies residues 687 to 707; that stretch reads KYGFVAWLLSTSVGLSLSFLS. The Cytoplasmic portion of the chain corresponds to 708–711; that stretch reads KSSV. A helical membrane pass occupies residues 712-732; the sequence is LLGISLTVPLMAACLSIAVPI. Residues 733 to 760 are Extracellular-facing; sequence WMHNGYQFWVPQLSCGDQARDLRSPRIK. Residues 761–782 traverse the membrane as a helical segment; sequence GFILWICVVLFAGSVISLGAII. The Cytoplasmic portion of the chain corresponds to 783–813; sequence SAKPLDDLKYKLFSARENNVTSPYTSSVYLG. The helical transmembrane segment at 814–834 threads the bilayer; sequence WAMSSGIALVVTAILPIVSWF. Residues 835 to 844 are Extracellular-facing; sequence ATYRFSHSSA. A helical membrane pass occupies residues 845 to 865; it reads VCLMIFSVVLVAFCGTSYLEV. Residues 866-878 are Cytoplasmic-facing; the sequence is VKSRDDQLPTKGD. The helical transmembrane segment at 879-899 threads the bilayer; that stretch reads FLAALLPLACIPALLSLCCGM. The Extracellular segment spans residues 900 to 912; the sequence is VKWKDDCWILSRG. A helical membrane pass occupies residues 913–933; sequence VYVFFSIGLLLLFGAIAAVIA. At 934 to 936 the chain is on the cytoplasmic side; it reads VKP. A helical membrane pass occupies residues 937 to 957; that stretch reads WTIGVSFLLVLFLMVVTIGVI. Over 958–971 the chain is Extracellular; it reads HLWASNNFYLTRKQ. The helical transmembrane segment at 972 to 992 threads the bilayer; that stretch reads TSFVCFLALLLGLAAFLLGWH. Over 993–1006 the chain is Cytoplasmic; sequence QDKAFAGASVGYFT. A helical transmembrane segment spans residues 1007-1027; sequence FLSLLAGRALAVLLSPPIVVY. At 1028-1050 the chain is on the extracellular side; it reads SPRVLPVYVYDAHADCGKNVSAA. A helical membrane pass occupies residues 1051–1071; the sequence is FLVLYGIALATEGWGVVASLI. Topologically, residues 1072 to 2151 are cytoplasmic; it reads IYPPFAGAAV…TKASIVLEAL (1080 aa). 2 Calpain catalytic domains span residues 1407–1600 and 1695–1997; these read SGKH…DMID and QFTD…CRVY. Active-site residues include C1761, H1919, and N1939.

Belongs to the peptidase C2 family. Autocatalytic proteolytic cleavage leading to the production of mainly cytoplasmic localized subproducts of about 85 and 120 kDa. As to expression, mostly expressed in meristems and organ primordia. Expressed at low levels in young and germinating seeds at 10 ppm and in seedling roots at 67 ppm. Present in most tissues at a low level.

It is found in the cell membrane. The protein resides in the endosome membrane. The protein localises to the endoplasmic reticulum membrane. Its subcellular location is the cytoplasm. Its function is as follows. Essential protease involved in epiderm development. Required for aleurone cell development in the endosperm probably by maintaining and restricting the aleurone and embryonic epidermal L1 cell-layer fates as well as meristems organization. Involved in the maintenance of adaxial/abaxial axis information in developing leaves, probably by regulating cell proliferation and expansion. Does not need calcium ions to be active. Required for the formation of giant cells in sepals by determining cell fate and promoting endoreplication. The polypeptide is Calpain-type cysteine protease DEK1 (Arabidopsis thaliana (Mouse-ear cress)).